The primary structure comprises 410 residues: Lissencephaly-1 homolog (410 aa).

The 33-residue stretch at 7 to 39 (QRDELNRAIADYLRSNGYEEAYSVFKKEAELDM) folds into the LisH domain. Residues 56-82 (TSVIRLQKKVMELESKLNEAKEEFTSG) are a coiled coil. WD repeat units lie at residues 106 to 147 (GHRS…RTLK), 148 to 189 (GHTD…RTMH), 190 to 229 (GHDH…CVKT), 232 to 271 (GHRE…CKAE), 274 to 333 (EHEH…CLMT), 336 to 377 (GHDN…KTLN), and 379 to 410 (HEHF…WECR).

It belongs to the WD repeat LIS1/nudF family. In terms of assembly, can self-associate. Component of the cytosolic PAF-AH (I) heterotetrameric enzyme, which is composed of PAFAH1B1 (beta), PAFAH1B2 (alpha2) and PAFAH1B3 (alpha1) subunits. The catalytic activity of the enzyme resides in the alpha1 (PAFAH1B3) and alpha2 (PAFAH1B2) subunits, whereas the beta subunit (PAFAH1B1) has regulatory activity. Trimer formation is not essential for the catalytic activity. Interacts with dynein, dynactin, nde1 and ndel1.

The protein localises to the cytoplasm. The protein resides in the cytoskeleton. It localises to the microtubule organizing center. Its subcellular location is the centrosome. Functionally, regulatory subunit (beta subunit) of the cytosolic type I platelet-activating factor (PAF) acetylhydrolase (PAF-AH (I)), an enzyme that catalyzes the hydrolyze of the acetyl group at the sn-2 position of PAF and its analogs and participates in PAF inactivation. Regulates the PAF-AH (I) activity in a catalytic dimer composition-dependent manner. Positively regulates the activity of the minus-end directed microtubule motor protein dynein. May enhance dynein-mediated microtubule sliding by targeting dynein to the microtubule plus end. Required for several dynein- and microtubule-dependent processes such as the maintenance of Golgi integrity, the peripheral transport of microtubule fragments and the coupling of the nucleus and centrosome. May be required for proliferation of neuronal precursors and neuronal migration. The protein is Lissencephaly-1 homolog (pafah1b1) of Xenopus laevis (African clawed frog).